A 90-amino-acid polypeptide reads, in one-letter code: Conotoxin Vc22.1 (90 aa).

A signal peptide spans 1-18; it reads MMTRVFLAMFFLLVLTKG.

It belongs to the E superfamily. Contains 4 disulfide bonds. Expressed by the venom duct.

Its subcellular location is the secreted. This Conus victoriae (Queen Victoria cone) protein is Conotoxin Vc22.1.